Here is a 416-residue protein sequence, read N- to C-terminus: Tyrosine-protein phosphatase non-receptor type 2 (416 aa).

The Tyrosine-protein phosphatase domain maps to 5–275; that stretch reads IEREFEELDA…RFSYMAIIEG (271 aa). At Y22 the chain carries Phosphotyrosine. Residue S52 is modified to Phosphoserine. Y68 is modified (phosphotyrosine). Substrate contacts are provided by residues D182, 216-222, and Q260; that span reads CSAGIGR. The active-site Phosphocysteine intermediate is C216. S-nitrosocysteine is present on C216. A phosphoserine mark is found at S293, S298, S304, S320, and S339. Residues 341 to 410 are endoplasmic reticulum location; that stretch reads ESILRKRIRE…WTLLFQLNVL (70 aa). Positions 371-410 are may mediate interaction with STX17; sequence ERKRKRWLYWQPILTKMGFVSVILVGALVGWTLLFQLNVL.

The protein belongs to the protein-tyrosine phosphatase family. Non-receptor class 1 subfamily. Interacts with RMDN3. Interacts with TMED9. Interacts with STX17; dephosphorylates STX17. Interacts with ITGA1 (via cytoplasmic domain); activates the phosphatase activity towards EGFR. Interacts with TRAF2; probably involved in tumor necrosis factor-mediated signaling. Interacts with MET. Interacts with FAM220A and STAT3; interaction with FAM220A promotes interaction of PTPN2 with transcriptional activator STAT3, leading to dephosphorylation of STAT3 by PTPN2 and negative regulation of STAT3 transcriptional activator activity. Post-translationally, specifically phosphorylated in a cell cycle-dependent manner by cyclin-dependent kinases CDK1 and CDK2. Probably activated through phosphorylation by PKR. In terms of tissue distribution, does not show tissue- or cell-type specificity although levels of transcription show variability. Macrophages showed higher levels of expression than lymphocytes.

It localises to the cytoplasm. Its subcellular location is the endoplasmic reticulum-Golgi intermediate compartment. The protein resides in the endoplasmic reticulum. It is found in the nucleus membrane. The protein localises to the nucleus. It localises to the cell membrane. It catalyses the reaction O-phospho-L-tyrosyl-[protein] + H2O = L-tyrosyl-[protein] + phosphate. Its function is as follows. Non-receptor type tyrosine-specific phosphatase that dephosphorylates receptor protein tyrosine kinases including INSR, EGFR, CSF1R, PDGFR. Also dephosphorylates non-receptor protein tyrosine kinases like JAK1, JAK2, JAK3, Src family kinases, STAT1, STAT3 and STAT6 either in the nucleus or the cytoplasm. Negatively regulates numerous signaling pathways and biological processes like hematopoiesis, inflammatory response, cell proliferation and differentiation, and glucose homeostasis. Plays a multifaceted and important role in the development of the immune system. Functions in T-cell receptor signaling through dephosphorylation of FYN and LCK to control T-cells differentiation and activation. Dephosphorylates CSF1R, negatively regulating its downstream signaling and macrophage differentiation. Negatively regulates cytokine (IL2/interleukin-2 and interferon)-mediated signaling through dephosphorylation of the cytoplasmic kinases JAK1, JAK3 and their substrate STAT1, that propagate signaling downstream of the cytokine receptors. Also regulates the IL6/interleukin-6 and IL4/interleukin-4 cytokine signaling through dephosphorylation of STAT3 and STAT6 respectively. In addition to the immune system, it is involved in anchorage-dependent, negative regulation of EGF-stimulated cell growth. Activated by the integrin ITGA1/ITGB1, it dephosphorylates EGFR and negatively regulates EGF signaling. Dephosphorylates PDGFRB and negatively regulates platelet-derived growth factor receptor-beta signaling pathway and therefore cell proliferation. Negatively regulates tumor necrosis factor-mediated signaling downstream via MAPK through SRC dephosphorylation. May also regulate the hepatocyte growth factor receptor signaling pathway through dephosphorylation of the hepatocyte growth factor receptor MET. Also plays an important role in glucose homeostasis. For instance, negatively regulates the insulin receptor signaling pathway through the dephosphorylation of INSR and control gluconeogenesis and liver glucose production through negative regulation of the IL6 signaling pathways. May also bind DNA. The protein is Tyrosine-protein phosphatase non-receptor type 2 (Ptpn2) of Rattus norvegicus (Rat).